We begin with the raw amino-acid sequence, 1998 residues long: Receptor-type tyrosine-protein phosphatase beta (1998 aa).

An N-terminal signal peptide occupies residues 1-22 (MLRHGALTALWITLSVVQTGVA). 17 Fibronectin type-III domains span residues 23–109 (EQVK…VLQT), 113–206 (PPAR…VPSP), 207–291 (VKDL…TAPM), 292–384 (EVSN…VRNL), 378–466 (PEKV…QGRT), 470–556 (AVLQ…TVPA), 557–642 (QVTD…EGRT), 643–733 (VPSS…TVPD), 734–821 (KVQG…TIPE), 822–913 (PVKD…TVKN), 908–994 (PSTV…LGQT), 995–1088 (VPAS…VPAA), 1086–1173 (PAAV…GRTV), 1176–1263 (AVNH…TAPS), 1264–1357 (PPSL…TKPD), 1358–1449 (KIQN…IDRP), and 1449–1551 (PPQP…KLGA). At 23–1622 (EQVKCNFTLL…ESEPLFGVIE (1600 aa)) the chain is on the extracellular side. N-linked (GlcNAc...) asparagine glycosylation is found at asparagine 28, asparagine 53, asparagine 75, asparagine 173, asparagine 199, and asparagine 268. Residues asparagine 415, asparagine 422, asparagine 480, asparagine 575, asparagine 599, and asparagine 653 are each glycosylated (N-linked (GlcNAc...) asparagine). N-linked (GlcNAc...) asparagine glycosylation is present at asparagine 830. 10 N-linked (GlcNAc...) asparagine glycosylation sites follow: asparagine 1041, asparagine 1097, asparagine 1164, asparagine 1186, asparagine 1213, asparagine 1275, asparagine 1368, asparagine 1471, asparagine 1475, and asparagine 1519. A helical transmembrane segment spans residues 1623 to 1643 (GVSAGLFLIGMLVALVAFFIC). Topologically, residues 1644–1997 (RQKASHSRER…EYHRDAIYSR (354 aa)) are cytoplasmic. The region spanning 1704-1964 (LSKEYEDLKD…VYLHQCVRDV (261 aa)) is the Tyrosine-protein phosphatase domain. Residues aspartate 1871, 1905–1911 (CSAGVGR), and glutamine 1949 contribute to the substrate site. Cysteine 1905 acts as the Phosphocysteine intermediate in catalysis. Tyrosine 1982 carries the post-translational modification Phosphotyrosine.

It belongs to the protein-tyrosine phosphatase family. Receptor class 3 subfamily. In terms of assembly, monomer. Interacts with TEK. Interacts via fibronectin type-III 17 domain with CDH5. Detected in a complex with CNTN1 and NRCAM. Interacts (phosphorylated form) with FYN and GRB2. Interacts with IGFBP2. In terms of tissue distribution, expression is very high in the vasculature of lung, spleen, and kidney, as well as in the heart valves, and is also present in the endothelium of arterioles and venules. Also expressed in tumor vasculature.

It localises to the membrane. The enzyme catalyses O-phospho-L-tyrosyl-[protein] + H2O = L-tyrosyl-[protein] + phosphate. Plays an important role in blood vessel remodeling and angiogenesis. Not necessary for the initial formation of blood vessels, but is essential for their maintenance and remodeling. Can induce dephosphorylation of TEK/TIE2, CDH5/VE-cadherin and KDR/VEGFR-2. Regulates angiopoietin-TIE2 signaling in endothelial cells. Acts as a negative regulator of TIE2, and controls TIE2 driven endothelial cell proliferation, which in turn affects blood vessel remodeling during embryonic development and determines blood vessel size during perinatal growth. Essential for the maintenance of endothelial cell contact integrity and for the adhesive function of VE-cadherin in endothelial cells and this requires the presence of plakoglobin. In Mus musculus (Mouse), this protein is Receptor-type tyrosine-protein phosphatase beta (Ptprb).